We begin with the raw amino-acid sequence, 335 residues long: MKIVIDAMGGDHAPFVTVEGAVEAVKNYDIHIILTGNQPLIENELVKYDYPKERIEVIHCSEQITNEDKPVISIRRKKDSSMVVGLKLVKEKKADAIISAGNSGALLAGGLLVLGRIKGIDRPALAPVYPTAKGISVLVDAGANAECKPRNLLEFGIMGSIYAEKVLEIKNPKVCTVNIGIEEEKGTELVKEAYQLCKEGPFNFQGNVEAREIPNGYADVIVCDGFTGNVILKLTEGLASSIFSLLKEEFLKNTFTKIGALLLKPGLKSFKKKLDYTEYGGAPLLGVKGVLIKAHGSSDGKAIKNAVGQAIKFMDNKVLEHISEGVSSLGDDEFE.

This sequence belongs to the PlsX family. As to quaternary structure, homodimer. Probably interacts with PlsY.

The protein localises to the cytoplasm. The catalysed reaction is a fatty acyl-[ACP] + phosphate = an acyl phosphate + holo-[ACP]. The protein operates within lipid metabolism; phospholipid metabolism. In terms of biological role, catalyzes the reversible formation of acyl-phosphate (acyl-PO(4)) from acyl-[acyl-carrier-protein] (acyl-ACP). This enzyme utilizes acyl-ACP as fatty acyl donor, but not acyl-CoA. The chain is Phosphate acyltransferase from Alkaliphilus oremlandii (strain OhILAs) (Clostridium oremlandii (strain OhILAs)).